We begin with the raw amino-acid sequence, 149 residues long: Myosin, essential light chain (149 aa).

2 EF-hand domains span residues 7–42 (SMIDEMKDGFPLFDNKGDGKIDGAQLGDVLRSFGLN) and 79–114 (GSYEDFFEGLKLFDKEGTGLISGAELRHVLATLGEK).

As to quaternary structure, myosin is a hexamer of 2 heavy chains and 4 light chains (two regulatory light chains and two essential light chains).

The protein is Myosin, essential light chain of Branchiostoma floridae (Florida lancelet).